The following is a 303-amino-acid chain: Lysosomal amino acid transporter 1 homolog (303 aa).

Topologically, residues 1–38 are lumenal; that stretch reads MAEGLRAPPPPGNGSECPDGARWVLRLLGECARDGRDV. N13 carries N-linked (GlcNAc...) asparagine glycosylation. The PQ-loop 1 domain occupies 36 to 102; sequence RDVGSALLGL…LANQLPLQVY (67 aa). The helical transmembrane segment at 39-59 threads the bilayer; that stretch reads GSALLGLLSIGCFAAAALPQF. At 60-73 the chain is on the cytoplasmic side; sequence YQACKTGIMDRALS. The helical transmembrane segment at 74–94 threads the bilayer; the sequence is IYFLLGWLGGDLLNLIGSFLA. Topologically, residues 95–96 are lumenal; it reads NQ. Residues 97–117 traverse the membrane as a helical segment; that stretch reads LPLQVYTAVYYVLADLVMLSL. The Cytoplasmic segment spans residues 118–131; it reads YGYYKAKNWGTGAT. A helical transmembrane segment spans residues 132-152; the sequence is ASINAACLFCLLGTATTLTVL. The Lumenal portion of the chain corresponds to 153–182; it reads SHDTGPAPNPAAFGGRSLLSLGLEGPGPEP. Residues 183-203 form a helical membrane-spanning segment; that stretch reads ISKTEIIGFAIGSISSVLYLC. The 66-residue stretch at 186–251 folds into the PQ-loop 2 domain; sequence TEIIGFAIGS…LKNPEPGQSE (66 aa). Residues 204-220 are Cytoplasmic-facing; that stretch reads SRLPQIYTNYRRKSTAG. The chain crosses the membrane as a helical span at residues 221–241; it reads VSFLLFALVMLGNLLYGTSVL. Residues 242 to 260 are Lumenal-facing; it reads LKNPEPGQSEGDYILHHLP. Residues 261–281 form a helical membrane-spanning segment; sequence WLIGSLGVLSLDVIISFQFLA. Residues 282-303 lie on the Cytoplasmic side of the membrane; sequence YRTGQPSAGEEREALLAEHGDS. The Di-leucine motif motif lies at 296-297; it reads LL.

The protein belongs to the laat-1 family.

It localises to the lysosome membrane. Amino acid transporter that specifically mediates the pH-dependent export of the cationic amino acids arginine, histidine and lysine from lysosomes. The polypeptide is Lysosomal amino acid transporter 1 homolog (SLC66A1) (Gallus gallus (Chicken)).